We begin with the raw amino-acid sequence, 340 residues long: Protein-arginine kinase (340 aa).

The 222-residue stretch at 21–242 (VVLSSRIRLA…EQIIMQERVA (222 aa)) folds into the Phosphagen kinase C-terminal domain. ATP-binding positions include 24–28 (SSRIR), His-79, Arg-113, 164–168 (RASVM), and 195–200 (RGIYGE).

This sequence belongs to the ATP:guanido phosphotransferase family.

It carries out the reaction L-arginyl-[protein] + ATP = N(omega)-phospho-L-arginyl-[protein] + ADP + H(+). In terms of biological role, catalyzes the specific phosphorylation of arginine residues in proteins. This Listeria monocytogenes serotype 4b (strain CLIP80459) protein is Protein-arginine kinase.